The following is a 491-amino-acid chain: Katanin p60 ATPase-containing subunit A1 (491 aa).

The tract at residues 1-29 is interaction with KATNB1; that stretch reads MSLLMISENVKLAREYALLGNYDSAMVYY. The segment at 1 to 75 is interaction with dynein and NDEL1; sequence MSLLMISENV…VKDIMKTLES (75 aa). The segment at 1-185 is interaction with microtubules; it reads MSLLMISENV…EPETNKFDST (185 aa). Residues Ser-42 and Ser-109 each carry the phosphoserine; by DYRK2 modification. A disordered region spans residues 87–185; it reads QHDLPASEGE…EPETNKFDST (99 aa). Position 133 is a phosphothreonine; by DYRK2 (Thr-133). Positions 145-169 are enriched in basic and acidic residues; the sequence is HNDRGKAVRCREKKEQNKGREEKNK. Ser-170 carries the post-translational modification Phosphoserine. 249–256 is a binding site for ATP; it reads GPPGTGKT.

This sequence belongs to the AAA ATPase family. Katanin p60 subunit A1 subfamily. In terms of assembly, can homooligomerize into hexameric rings, which may be promoted by interaction with microtubules. Interacts with KATNB1, which may serve as a targeting subunit. Interacts with ASPM; the katanin complex formation KATNA1:KATNB1 is required for the association of ASPM Interacts with dynein and NDEL1. Associates with the E3 ligase complex containing DYRK2, EDD/UBR5, DDB1 and DCAF1 proteins (EDVP complex). Interacts with KLHL42 (via the kelch domains). Interacts with CUL3; the interaction is enhanced by KLHL42. Interacts with KATNB1 and KATNBL1. Interacts with CAMSAP2 and CAMSAP3; leading to regulate the length of CAMSAP-decorated microtubule stretches. In terms of processing, phosphorylation by DYRK2 triggers ubiquitination and subsequent degradation. Post-translationally, ubiquitinated by the BCR(KLHL42) E3 ubiquitin ligase complex, leading to its proteasomal degradation. Ubiquitinated by the EDVP E3 ligase complex and subsequently targeted for proteasomal degradation.

Its subcellular location is the cytoplasm. It localises to the midbody. The protein localises to the cytoskeleton. It is found in the microtubule organizing center. The protein resides in the centrosome. Its subcellular location is the spindle pole. It localises to the spindle. The enzyme catalyses n ATP + n H2O + a microtubule = n ADP + n phosphate + (n+1) alpha/beta tubulin heterodimers.. With respect to regulation, ATPase activity is stimulated by microtubules, which promote homooligomerization. ATP-dependent microtubule severing is stimulated by interaction with KATNB1. Catalytic subunit of a complex which severs microtubules in an ATP-dependent manner. Microtubule severing may promote rapid reorganization of cellular microtubule arrays and the release of microtubules from the centrosome following nucleation. Microtubule release from the mitotic spindle poles may allow depolymerization of the microtubule end proximal to the spindle pole, leading to poleward microtubule flux and poleward motion of chromosome. Microtubule release within the cell body of neurons may be required for their transport into neuronal processes by microtubule-dependent motor proteins. This transport is required for axonal growth. This Macaca fascicularis (Crab-eating macaque) protein is Katanin p60 ATPase-containing subunit A1.